Here is a 356-residue protein sequence, read N- to C-terminus: Photosynthetic reaction center cytochrome c subunit (356 aa).

The signal sequence occupies residues 1–20 (MKQLIVNSVATVALASLVAG). The S-diacylglycerol cysteine moiety is linked to residue Cys-21. The heme site is built by Met-94, Cys-107, Cys-110, His-111, Met-130, His-144, Cys-152, Cys-155, His-156, Met-253, Cys-264, Cys-267, His-268, Cys-325, Cys-328, and His-329.

Component of the photosynthetic reaction center composed of protein subunits L (PufL), M (PufM), H (PuhA) and cytochrome C (PufC). Post-translationally, binds 4 heme groups per subunit. In terms of processing, after the signal sequence is removed, the N-terminal cysteine is modified to form a diacylglyceride thioether, but the alpha-amino group is free and is not N-palmitoylated.

Its subcellular location is the cellular chromatophore membrane. In terms of biological role, the reaction center of purple bacteria contains a tightly bound cytochrome molecule which re-reduces the photo oxidized primary electron donor. The sequence is that of Photosynthetic reaction center cytochrome c subunit from Blastochloris viridis (Rhodopseudomonas viridis).